The sequence spans 917 residues: Hexokinase-1 (917 aa).

Met-1 is subject to N-acetylmethionine. The segment at 1 to 10 (MIAAQLLAYY) is mitochondrial-binding peptide (MBP). 2 consecutive Hexokinase domains span residues 16 to 458 (DDQV…MVTA) and 464 to 906 (AEQH…LITA). ATP-binding positions include Arg-30 and 84-89 (DLGGSS). The hexokinase small subdomain 1 stretch occupies residues 73 to 207 (DGSEKGDFIA…DYDANIVAVV (135 aa)). 84–91 (DLGGSSFR) is a binding site for D-glucose 6-phosphate. Residues Ser-155, 172–173 (TK), and 208–209 (ND) contribute to the D-glucose site. Residues 208 to 447 (NDTVGTMMTC…SDVRFLLSES (240 aa)) are hexokinase large subdomain 1. 2 residues coordinate D-glucose 6-phosphate: Asp-209 and Thr-232. D-glucose-binding positions include Asn-235, Glu-260, and 291–294 (QLFE). Ser-337 bears the Phosphoserine mark. Residue Asn-345 participates in ATP binding. A D-glucose 6-phosphate-binding site is contributed by 413-415 (DGS). Residue 425-426 (RR) coordinates ATP. D-glucose 6-phosphate-binding positions include Ser-449 and 532-536 (DLGGT). The interval 521–655 (DGTENGDFLA…EFDLDVVAVV (135 aa)) is hexokinase small subdomain 2. 532-537 (DLGGTN) is a binding site for ATP. D-glucose-binding positions include 603–604 (SF), 620–621 (TK), and 656–657 (ND). The interval 656 to 895 (NDTVGTMMTC…CNVSFLLSED (240 aa)) is hexokinase large subdomain 2. D-glucose 6-phosphate contacts are provided by Asp-657 and Thr-680. Thr-680 lines the ATP pocket. D-glucose is bound by residues 682-683 (SN), Glu-708, and Glu-742. ATP-binding positions include 747–748 (GM), 784–788 (TKFLS), and 863–867 (TLYKL). D-glucose 6-phosphate-binding positions include 861-863 (DGT) and Ser-897.

Belongs to the hexokinase family. In terms of assembly, monomer. Interacts with RABL2/RABL2A; binds preferentially to GTP-bound RABL2. Interacts with VDAC1. The HK1-VDAC1 complex interacts with ATF2. Interacts (via N-terminal spermatogenic cell-specific region) with PFKM (via C-terminus). Interacts with SMAD5. In terms of tissue distribution, isoform 2: Erythrocyte specific. Isoform 3: Testis-specific. Isoform 4: Testis-specific.

It is found in the mitochondrion outer membrane. Its subcellular location is the cytoplasm. It localises to the cytosol. It carries out the reaction a D-hexose + ATP = a D-hexose 6-phosphate + ADP + H(+). The catalysed reaction is D-fructose + ATP = D-fructose 6-phosphate + ADP + H(+). It catalyses the reaction D-glucose + ATP = D-glucose 6-phosphate + ADP + H(+). The enzyme catalyses D-mannose + ATP = D-mannose 6-phosphate + ADP + H(+). It carries out the reaction D-glucosamine + ATP = D-glucosamine 6-phosphate + ADP + H(+). Its pathway is carbohydrate metabolism; hexose metabolism. The protein operates within carbohydrate degradation; glycolysis; D-glyceraldehyde 3-phosphate and glycerone phosphate from D-glucose: step 1/4. With respect to regulation, hexokinase is an allosteric enzyme inhibited by its product D-glucose 6-phosphate. Hexokinase activity is inhibited by N-acetyl-D-glucosamine. In terms of biological role, catalyzes the phosphorylation of various hexoses, such as D-glucose, D-glucosamine, D-fructose, D-mannose and 2-deoxy-D-glucose, to hexose 6-phosphate (D-glucose 6-phosphate, D-glucosamine 6-phosphate, D-fructose 6-phosphate, D-mannose 6-phosphate and 2-deoxy-D-glucose 6-phosphate, respectively). Does not phosphorylate N-acetyl-D-glucosamine. Mediates the initial step of glycolysis by catalyzing phosphorylation of D-glucose to D-glucose 6-phosphate. Involved in innate immunity and inflammation by acting as a pattern recognition receptor for bacterial peptidoglycan. When released in the cytosol, N-acetyl-D-glucosamine component of bacterial peptidoglycan inhibits the hexokinase activity of HK1 and causes its dissociation from mitochondrial outer membrane, thereby activating the NLRP3 inflammasome. This chain is Hexokinase-1, found in Homo sapiens (Human).